The sequence spans 517 residues: MLPVSNPSSPEHLLKKSRTPDSTTSIDRKNSFNSLHSVGNRSSYIAASRSHCTWLILSLLSLQLILFLTLRSIPFPHRHIPENFPSPAAVVTTTVTTTVISAASSNPPLSSSSSDERCDSGRVFVYDMPKIFNEVILQQCDNLNPWSSRCDALSNDGFGQEATSLSNVIPKDLVQSWFWTDQFVTEIIFHNRILNHRCRTLDPESATAFYIPFYAGLAVGQYLWSNYAAADRDRHCKMMTQWVKNQPYWNRSNGWDHFITMGRITWDFRRSKDEDWGSNCIYIPGMRNITRLLIERNSWDHFDVGVPYPTGFHPRSDSDVVNWQDFVRNRRRETLFCFAGAPRAGIVNDFRGLLLRHCEESRGKCRTVDCTVGKCSNGSSAILETFLGSDFCLQPRGDSFTRRSIFDCMLAGSIPVFFWRRSAYMQYQWFLPDKPDSYSVFIDRNEVTNGTTSIKEVLERYSKEDVRKMRERVIDLIPNLVYAKSPNGLETFKDAFDVAIDGVFRRFKEQEKWYKWR.

The tract at residues 1–31 is disordered; sequence MLPVSNPSSPEHLLKKSRTPDSTTSIDRKNS. At 1–49 the chain is on the cytoplasmic side; that stretch reads MLPVSNPSSPEHLLKKSRTPDSTTSIDRKNSFNSLHSVGNRSSYIAASR. Residues 20–31 show a composition bias toward polar residues; it reads PDSTTSIDRKNS. The helical; Signal-anchor for type II membrane protein transmembrane segment at 50 to 70 threads the bilayer; the sequence is SHCTWLILSLLSLQLILFLTL. Over 71-517 the chain is Lumenal; it reads RSIPFPHRHI…KEQEKWYKWR (447 aa). N-linked (GlcNAc...) asparagine glycosylation is found at asparagine 250, asparagine 288, asparagine 377, and asparagine 449.

Belongs to the glycosyltransferase 47 family. In terms of assembly, interacts with CSLC4, FUT1, XXT2 and XXT5. As to expression, expressed in roots, hypocotyls, cotyledons, leaves, stems and flowers.

Its subcellular location is the golgi apparatus membrane. Functions in xyloglucan synthesis by adding side chains to the xylosylated glucan backbone. Involved in galactosylating hemicellulose xyloglucan (XyG) at the second position of the XXXG motif to form XLXG. Associates with other xyloglucan-synthesizing enzymes to form multiprotein complexes for xyloglucan synthesis in the Golgi. The chain is Xyloglucan galactosyltransferase XLT2 from Arabidopsis thaliana (Mouse-ear cress).